We begin with the raw amino-acid sequence, 338 residues long: MADKKIRIGINGFGRIGRLVARVVLQRDDVELVAVNDPFITTEYMTYMFKYDSVHGQWKHHELKVKDDKTLLFGEKPVTVFGIRNPEDIPWGEAGADFVVESTGVFTDKDKAAAHLKGGAKKVVISAPSKDAPMFVVGVNEHEYKSDLDIVSNASCTTNCLAPLAKVINDRFGIVEGLMTTVHSITATQKTVDGPSMKDWRGGRAASFNIIPSSTGAAKAVGKVLPSLNGKLTGMSFRVPTVDVSVVDLTVRLEKAATYDEIKKAIKEESEGKMKGILGYTEDDVVSTDFVGDNRSSIFDAKAGIALSDKFVKLVSWYDNEWGYSSRVVDLIVHMSKA.

Residues 15 to 16 (RI), Asp-37, and Arg-84 each bind NAD(+). 155–157 (SCT) provides a ligand contact to D-glyceraldehyde 3-phosphate. Catalysis depends on Cys-156, which acts as the Nucleophile. Cys-156 is modified (S-glutathionyl cysteine; transient; alternate). An S-nitrosocysteine; transient; alternate modification is found at Cys-156. At Cys-160 the chain carries S-nitrosocysteine; transient. Residues Thr-186, 215-216 (TG), and Arg-238 each bind D-glyceraldehyde 3-phosphate. Asn-320 contacts NAD(+).

This sequence belongs to the glyceraldehyde-3-phosphate dehydrogenase family. Homotetramer. Interacts with PLDDELTA. Binds to DPB3-1/NF-YC10 in response to heat-stress; this interaction promotes DPB3-1/NF-YC10 DNA-binding ability to its target promoter. S-glutathionylation at Cys-156 in the presence of oxidized glutathione (GSSG). S-nitrosylation at Cys-156 and Cys-160 in the presence of S-nitrosoglutathione (GSNO) or sodium nitroprusside (SNP). These reactions may be both a protective mechanism against irreversible oxidation and a mean to store inhibited enzyme in a recoverable form.

The protein localises to the cytoplasm. It localises to the nucleus. It catalyses the reaction D-glyceraldehyde 3-phosphate + phosphate + NAD(+) = (2R)-3-phospho-glyceroyl phosphate + NADH + H(+). The protein operates within carbohydrate degradation; glycolysis; pyruvate from D-glyceraldehyde 3-phosphate: step 1/5. Its activity is regulated as follows. Inhibition by oxidized glutathione (GSSG), S-nitrosoglutathione (GSNO) and hydrogen peroxide. Key enzyme in glycolysis that catalyzes the first step of the pathway by converting D-glyceraldehyde 3-phosphate (G3P) into 3-phospho-D-glyceroyl phosphate. Essential for the maintenance of cellular ATP levels and carbohydrate metabolism. Binds DNA in vitro. Together with DNA polymerase II subunit B3-1 (DPB3-1) and GAPC1, enhances heat tolerance and promotes the expression of heat-inducible genes. In Arabidopsis thaliana (Mouse-ear cress), this protein is Glyceraldehyde-3-phosphate dehydrogenase GAPC2, cytosolic.